The primary structure comprises 132 residues: Interleukin-5 (132 aa).

The signal sequence occupies residues 1–19 (MRMLLCLNVLTLSCVWAIA). N-linked (GlcNAc...) asparagine glycosylation is found at Asn-45, Asn-74, and Asn-88.

Belongs to the IL-5 family. As to quaternary structure, homodimer; disulfide-linked. Interacts with IL5RA. Interacts with CSF2RB.

The protein localises to the secreted. Homodimeric cytokine expressed predominantly by T-lymphocytes and NK cells that plays an important role in the survival, differentiation, and chemotaxis of eosinophils. Acts also on activated and resting B-cells to induce immunoglobulin production, growth, and differentiation. Mechanistically, exerts its biological effects through a receptor composed of IL5RA subunit and the cytokine receptor common subunit beta/CSF2RB. Binding to the receptor leads to activation of various kinases including LYN, SYK and JAK2 and thereby propagates signals through the RAS-MAPK and JAK-STAT5 pathways respectively. The polypeptide is Interleukin-5 (Il5) (Rattus norvegicus (Rat)).